Here is a 93-residue protein sequence, read N- to C-terminus: Small ribosomal subunit protein uS19 (93 aa).

This sequence belongs to the universal ribosomal protein uS19 family.

Its function is as follows. Protein S19 forms a complex with S13 that binds strongly to the 16S ribosomal RNA. In Mycolicibacterium paratuberculosis (strain ATCC BAA-968 / K-10) (Mycobacterium paratuberculosis), this protein is Small ribosomal subunit protein uS19.